The sequence spans 413 residues: Tryptophan synthase beta chain 2 (413 aa).

K107 carries the N6-(pyridoxal phosphate)lysine modification.

It belongs to the TrpB family. Tetramer of two alpha and two beta chains. The cofactor is pyridoxal 5'-phosphate.

The enzyme catalyses (1S,2R)-1-C-(indol-3-yl)glycerol 3-phosphate + L-serine = D-glyceraldehyde 3-phosphate + L-tryptophan + H2O. The protein operates within amino-acid biosynthesis; L-tryptophan biosynthesis; L-tryptophan from chorismate: step 5/5. In terms of biological role, the beta subunit is responsible for the synthesis of L-tryptophan from indole and L-serine. This chain is Tryptophan synthase beta chain 2 (trpB2), found in Nostoc sp. (strain PCC 7120 / SAG 25.82 / UTEX 2576).